Consider the following 1327-residue polypeptide: MAPKDDPDNRGFDDQRRPSQRSTVLAIPALAVNDPKSDPKIASDLPANYVDDDDDAPKMYTPSLLEKILNYALCRGDIANQQLEAQPVSIPGLFRYGKKFDYLLLFIGTICAIISGVSQPILALVSGRVTNALLVYPPTSKQFRNKANENVYIFLGIGIFISITNFIQYMCFQHCCTRVMAQMRHRFVYSVLRQNAGWFDKNHSGTITTKLNDSMERIREGIGDKLGVLLRGFAMLIAAIVVAYIYEWRLASMMLGVAPTCCICMSLLARQMTSTTIKELIGVGKAGSIAEESLMGVRTVQAFNGQEEMVGRYEAELEKGRKFAVWKGFWSGFFGGLFFFWLFSFLGCGMLYGAYLLKVGIITTPGDVFIVVMSMLLGAYFLGLISPHMMVLLNARVSAASIYQTIDRVPKIDPYSKAGKRLQNVVGRVKFENVHFRYPSRKDAKILNGLNLVVEPGTSVALVGHSGCGKSTSVGLLTRLYEPEAGNVTIDGTDVRELNIEWLRNTVGIVQQEPILFNDTIHNNLLIGNPGSTRETMIEVCKMANAHDFIEKMPKGYDTLIGDGGVQLSGGQKQRVAIARTLIRDPKVLLLDEATSALDAQSESIVQSALNNASKGRTTIMIAHRLSTIREADKIVFFEKGVIVEAGNHEELVRLGGRYFDLVKAQQFKADPEATEEFEEEEIDLDDTSRSSRRSSMTSARSGSEAFRRGNSLNDSFSGSKRSAQADAENSAFAANEAAIMAEDGQITAGYLDIFKNAKGNYLYMFLGTVFALIRGLELPALALIFGWVFEGFTFVPYGGRMMHRMAMAVIAFASVGVGVWFSQLASSVLFAVVSENLSMRFRVQSFRNLLYQDASYFDNPAHAPGKLITRLASDAPNIKAVVDARMLQVIYALAAIIANIAIAFIYCWQIGILGTSLILLLAFVMIGLAYKISLMNVEQIQNDDAGRIAIEIIENVKTIQLLTRCELFFDHYQTSSKQQKRSELKKGMIEAINYSLTQSFMYFMMCFTYAVGIRIIYQGDKSSDDTFKGIIAMMLGAVAVMNSAQYFPEFVKAKTAAGMLFNIIYRKPRTGDLMEGDRPEIRGNILFENVKFSYPQRPLQPIMKGLQWTALRGQTVALVGPSGSGKSTNIGMLERFYDVTGGALRIDGQDIRKLSLFHLRTQMALVGQEPRLFAGTIRENVCLGLKDVPLEKINQALELANANRFLANLPAGIDTDVGEKGGQLSGGQKQRIAIARALVRDPKILLLDEATSALDSESERAVQEALDRAREGRTCITIAHRLSSIQNSDLIVYIDKGKVQEAGNHTQLMHQKGRYYKLIKKQDLAV.

Over residues 1–17 the composition is skewed to basic and acidic residues; sequence MAPKDDPDNRGFDDQRR. Residues 1-23 are disordered; the sequence is MAPKDDPDNRGFDDQRRPSQRST. The Cytoplasmic segment spans residues 1-104; that stretch reads MAPKDDPDNR…RYGKKFDYLL (104 aa). Residues 105–125 traverse the membrane as a helical segment; that stretch reads LFIGTICAIISGVSQPILALV. The region spanning 106 to 394 is the ABC transmembrane type-1 1 domain; that stretch reads FIGTICAIIS…ISPHMMVLLN (289 aa). Residues 126 to 151 are Extracellular-facing; that stretch reads SGRVTNALLVYPPTSKQFRNKANENV. Residues 152–172 traverse the membrane as a helical segment; that stretch reads YIFLGIGIFISITNFIQYMCF. At 173–225 the chain is on the cytoplasmic side; it reads QHCCTRVMAQMRHRFVYSVLRQNAGWFDKNHSGTITTKLNDSMERIREGIGDK. The helical transmembrane segment at 226–246 threads the bilayer; sequence LGVLLRGFAMLIAAIVVAYIY. Glutamate 247 is a topological domain (extracellular). Residues 248 to 268 traverse the membrane as a helical segment; the sequence is WRLASMMLGVAPTCCICMSLL. The Cytoplasmic segment spans residues 269-331; it reads ARQMTSTTIK…KFAVWKGFWS (63 aa). A helical membrane pass occupies residues 332–352; sequence GFFGGLFFFWLFSFLGCGMLY. Over 353-364 the chain is Extracellular; that stretch reads GAYLLKVGIITT. The helical transmembrane segment at 365 to 385 threads the bilayer; the sequence is PGDVFIVVMSMLLGAYFLGLI. Residues 386-766 lie on the Cytoplasmic side of the membrane; the sequence is SPHMMVLLNA…NAKGNYLYMF (381 aa). One can recognise an ABC transporter 1 domain in the interval 429–665; that stretch reads VKFENVHFRY…GGRYFDLVKA (237 aa). Residue 464–471 participates in ATP binding; it reads GHSGCGKS. Positions 671 to 721 are disordered; sequence DPEATEEFEEEEIDLDDTSRSSRRSSMTSARSGSEAFRRGNSLNDSFSGSK. Over residues 673–686 the composition is skewed to acidic residues; it reads EATEEFEEEEIDLD. Low complexity predominate over residues 694–704; sequence RSSMTSARSGS. Residues 711 to 721 show a composition bias toward polar residues; sequence NSLNDSFSGSK. One can recognise an ABC transmembrane type-1 2 domain in the interval 766–1053; the sequence is FLGTVFALIR…SAQYFPEFVK (288 aa). A helical membrane pass occupies residues 767–789; that stretch reads LGTVFALIRGLELPALALIFGWV. Residues 790–805 lie on the Extracellular side of the membrane; it reads FEGFTFVPYGGRMMHR. The helical transmembrane segment at 806-826 threads the bilayer; it reads MAMAVIAFASVGVGVWFSQLA. The Cytoplasmic portion of the chain corresponds to 827-886; that stretch reads SSVLFAVVSENLSMRFRVQSFRNLLYQDASYFDNPAHAPGKLITRLASDAPNIKAVVDAR. Residues 887-907 form a helical membrane-spanning segment; it reads MLQVIYALAAIIANIAIAFIY. Over 908-910 the chain is Extracellular; the sequence is CWQ. The chain crosses the membrane as a helical span at residues 911–931; sequence IGILGTSLILLLAFVMIGLAY. The Cytoplasmic portion of the chain corresponds to 932–996; it reads KISLMNVEQI…KGMIEAINYS (65 aa). The helical transmembrane segment at 997-1017 threads the bilayer; it reads LTQSFMYFMMCFTYAVGIRII. Residues 1018–1030 lie on the Extracellular side of the membrane; it reads YQGDKSSDDTFKG. A helical membrane pass occupies residues 1031-1051; the sequence is IIAMMLGAVAVMNSAQYFPEF. The Cytoplasmic portion of the chain corresponds to 1052–1327; it reads VKAKTAAGML…KLIKKQDLAV (276 aa). In terms of domain architecture, ABC transporter 2 spans 1086-1322; that stretch reads ILFENVKFSY…KGRYYKLIKK (237 aa). 1121 to 1128 is a binding site for ATP; it reads GPSGSGKS.

Belongs to the ABC transporter superfamily. ABCB family. Multidrug resistance exporter (TC 3.A.1.201) subfamily. In terms of tissue distribution, expressed in pharyngeal epithelial cells that surround the anterior pharyngeal cuticle. Shares same expression pattern as sms-5.

It localises to the apical cell membrane. Contributes to the establishment of a polar lipid barrier to block small molecule passage into the pharyngeal cuticle. Probably exports polar lipids into the developing pharyngeal cuticle to protect against xenobiotic insult. Likely functions in the same pathway as sphingomyelin synthase sms-5. This Caenorhabditis elegans protein is P-glycoprotein 14.